The primary structure comprises 317 residues: MKSDCMQTTICQERKKDPIEMFHSGQLVKVCAPMVRYSKLAFRTLVRKYSCDLCYTPMIVAADFVKSIKARDSEFTTNQGDCPLIVQFAANDARLLSDAARIVCPYANGIDINCGCPQRWAMAEGYGACLINKPELVQDMVKQVRNQVETPGFSVSIKIRIHDDLKRTVDLCQKAEATGVSWITVHGRTAEERHQPVHYDSIKIIKENMSIPVIANGDIRSLKEAENVWRITGTDGVMVARGLLANPAMFAGYEETPLKCIWDWVDIALELGTPYMCFHQHLMYMMEKITSRQEKRVFNALSSTSAIIDYLTDHYGI.

Residues 33–35 (PMV) and Gln-87 each bind FMN. Residue Cys-116 is the Proton donor of the active site. FMN is bound by residues Lys-158, His-186, 216 to 218 (NGD), and 240 to 241 (AR).

This sequence belongs to the Dus family. Dus4 subfamily. The cofactor is FMN.

It catalyses the reaction 5,6-dihydrouridine(20a) in tRNA + NADP(+) = uridine(20a) in tRNA + NADPH + H(+). It carries out the reaction 5,6-dihydrouridine(20a) in tRNA + NAD(+) = uridine(20a) in tRNA + NADH + H(+). The catalysed reaction is 5,6-dihydrouridine(20b) in tRNA + NAD(+) = uridine(20b) in tRNA + NADH + H(+). The enzyme catalyses 5,6-dihydrouridine(20b) in tRNA + NADP(+) = uridine(20b) in tRNA + NADPH + H(+). Functionally, catalyzes the synthesis of dihydrouridine, a modified base found in the D-loop of most tRNAs. This is tRNA-dihydrouridine(20a/20b) synthase [NAD(P)+]-like (DUS4L) from Homo sapiens (Human).